The chain runs to 347 residues: Phenylalanine--tRNA ligase alpha subunit (347 aa).

E262 is a binding site for Mg(2+).

Belongs to the class-II aminoacyl-tRNA synthetase family. Phe-tRNA synthetase alpha subunit type 1 subfamily. In terms of assembly, tetramer of two alpha and two beta subunits. Mg(2+) serves as cofactor.

It localises to the cytoplasm. It carries out the reaction tRNA(Phe) + L-phenylalanine + ATP = L-phenylalanyl-tRNA(Phe) + AMP + diphosphate + H(+). The protein is Phenylalanine--tRNA ligase alpha subunit of Roseiflexus sp. (strain RS-1).